A 287-amino-acid chain; its full sequence is MAMQERCESLCSDELISSSDAFYLKTRKPYTITKQREKWTEAEHEKFVEALKLYGRAWRRIEEHVGTKTAVQIRSHAQKFFTKVARDFGVSSESIEIPPPRPKRKPMHPYPRKLVIPDAKEMVYAELTGSKLIQDEDNRSPTSVLSAHGSDGLGSIGSNSPNSSSAELSSHTEESLSLEAETKQSLKLFGKTFVVGDYNSSMSCDDSEDGKKKLYSETQSLQCSSSTSENAETEVVVSEFKRSERSAFSQLKSSVTEMNNMRGFMPYKKRVKVEENIDNVKLSYPLW.

The HTH myb-type domain occupies 31-85 (TITKQREKWTEAEHEKFVEALKLYGRAWRRIEEHVGTKTAVQIRSHAQKFFTKVA). The H-T-H motif DNA-binding region spans 58–81 (WRRIEEHVGTKTAVQIRSHAQKFF). The tract at residues 134–177 (QDEDNRSPTSVLSAHGSDGLGSIGSNSPNSSSAELSSHTEESLS) is disordered. Residues 156–169 (IGSNSPNSSSAELS) show a composition bias toward low complexity.

It is found in the nucleus. In terms of biological role, positive regulator for cold-responsive gene expression and cold tolerance. Part of a regulatory feedback loop that controls a subset of the circadian outputs and modulates the central oscillator. Negatively self-regulates its own expression. The chain is Protein REVEILLE 2 (RVE2) from Arabidopsis thaliana (Mouse-ear cress).